The following is a 353-amino-acid chain: Photosystem II protein D1 (353 aa).

Residue Thr2 is modified to N-acetylthreonine. Thr2 bears the Phosphothreonine mark. 3 helical membrane passes run 29-46, 118-133, and 142-156; these read YIGW…TATS, HFLL…EWEL, and WIAV…AATA. His118 is a binding site for chlorophyll a. Tyr126 is a binding site for pheophytin a. 2 residues coordinate [CaMn4O5] cluster: Asp170 and Glu189. The chain crosses the membrane as a helical span at residues 197–218; that stretch reads FHMLGVAGVFGGSLFSAMHGSL. His198 lines the chlorophyll a pocket. Residues His215 and 264–265 each bind a quinone; that span reads SF. Residue His215 participates in Fe cation binding. His272 is a Fe cation binding site. Residues 274-288 traverse the membrane as a helical segment; sequence FLAAWPVVGIWFTAL. 4 residues coordinate [CaMn4O5] cluster: His332, Glu333, Asp342, and Ala344. Residues 345 to 353 constitute a propeptide that is removed on maturation; the sequence is AVEVPSING.

This sequence belongs to the reaction center PufL/M/PsbA/D family. In terms of assembly, PSII is composed of 1 copy each of membrane proteins PsbA, PsbB, PsbC, PsbD, PsbE, PsbF, PsbH, PsbI, PsbJ, PsbK, PsbL, PsbM, PsbT, PsbX, PsbY, PsbZ, Psb30/Ycf12, at least 3 peripheral proteins of the oxygen-evolving complex and a large number of cofactors. It forms dimeric complexes. The D1/D2 heterodimer binds P680, chlorophylls that are the primary electron donor of PSII, and subsequent electron acceptors. It shares a non-heme iron and each subunit binds pheophytin, quinone, additional chlorophylls, carotenoids and lipids. D1 provides most of the ligands for the Mn4-Ca-O5 cluster of the oxygen-evolving complex (OEC). There is also a Cl(-1) ion associated with D1 and D2, which is required for oxygen evolution. The PSII complex binds additional chlorophylls, carotenoids and specific lipids. serves as cofactor. Post-translationally, tyr-161 forms a radical intermediate that is referred to as redox-active TyrZ, YZ or Y-Z. In terms of processing, C-terminally processed by CTPA; processing is essential to allow assembly of the oxygen-evolving complex and thus photosynthetic growth.

The protein resides in the plastid. It localises to the chloroplast thylakoid membrane. The enzyme catalyses 2 a plastoquinone + 4 hnu + 2 H2O = 2 a plastoquinol + O2. Its function is as follows. Photosystem II (PSII) is a light-driven water:plastoquinone oxidoreductase that uses light energy to abstract electrons from H(2)O, generating O(2) and a proton gradient subsequently used for ATP formation. It consists of a core antenna complex that captures photons, and an electron transfer chain that converts photonic excitation into a charge separation. The D1/D2 (PsbA/PsbD) reaction center heterodimer binds P680, the primary electron donor of PSII as well as several subsequent electron acceptors. The sequence is that of Photosystem II protein D1 from Cucumis sativus (Cucumber).